The primary structure comprises 128 residues: MNFIKEFREFAMRGNVVDMAVGVIIGSAFGKIVSSLVSDIFTPVLGILTGGIDFKDMKFVLAQAQGDVPAVTLNYGLFIQNVIDFIIIAFAIFMMIKVINKVRKPEEKKTAPKAETLLTEIRDLLKNK.

Residues 1-16 (MNFIKEFREFAMRGNV) lie on the Cytoplasmic side of the membrane. The chain crosses the membrane as a helical span at residues 17–45 (VDMAVGVIIGSAFGKIVSSLVSDIFTPVL). Topologically, residues 46-74 (GILTGGIDFKDMKFVLAQAQGDVPAVTLN) are periplasmic. A helical membrane pass occupies residues 75–94 (YGLFIQNVIDFIIIAFAIFM). The Cytoplasmic segment spans residues 95-128 (MIKVINKVRKPEEKKTAPKAETLLTEIRDLLKNK).

It belongs to the MscL family. As to quaternary structure, homopentamer.

It is found in the cell inner membrane. Its function is as follows. Channel that opens in response to stretch forces in the membrane lipid bilayer. Forms a nonselective ion channel with a conductance of about 4 nanosiemens. May participate in the regulation of osmotic pressure changes within the cell. The polypeptide is Large-conductance mechanosensitive channel (Haemophilus influenzae (strain ATCC 51907 / DSM 11121 / KW20 / Rd)).